We begin with the raw amino-acid sequence, 1101 residues long: Lysylphosphatidylglycerol biosynthesis bifunctional protein LysX (1101 aa).

Residues methionine 1 to aspartate 601 form a phosphatidylglycerol lysyltransferase region. A run of 7 helical transmembrane segments spans residues valine 18 to valine 38, phenylalanine 60 to alanine 80, isoleucine 84 to leucine 104, aspartate 113 to alanine 133, valine 151 to phenylalanine 171, tyrosine 183 to serine 200, and valine 207 to phenylalanine 227. Positions arginine 602–arginine 1101 are lysine--tRNA ligase. A DNA-binding region (OB) is located at residues valine 662–isoleucine 740. 2 residues coordinate Mg(2+): aspartate 1013 and glutamate 1020.

In the N-terminal section; belongs to the LPG synthetase family. This sequence in the C-terminal section; belongs to the class-II aminoacyl-tRNA synthetase family. Mg(2+) serves as cofactor.

It is found in the cell membrane. The enzyme catalyses tRNA(Lys) + L-lysine + ATP = L-lysyl-tRNA(Lys) + AMP + diphosphate. The catalysed reaction is L-lysyl-tRNA(Lys) + a 1,2-diacyl-sn-glycero-3-phospho-(1'-sn-glycerol) = a 1,2-diacyl-sn-glycero-3-phospho-1'-(3'-O-L-lysyl)-sn-glycerol + tRNA(Lys). Functionally, catalyzes the production of L-lysyl-tRNA(Lys)transfer and the transfer of a lysyl group from L-lysyl-tRNA(Lys) to membrane-bound phosphatidylglycerol (PG), which produces lysylphosphatidylglycerol (LPG), one of the components of the bacterial membrane with a positive net charge. LPG synthesis contributes to the resistance to cationic antimicrobial peptides (CAMPs) and likely protects M.tuberculosis against the CAMPs produced by competiting microorganisms (bacteriocins). In fact, the modification of anionic phosphatidylglycerol with positively charged L-lysine results in repulsion of the peptides. In Mycolicibacterium gilvum (strain PYR-GCK) (Mycobacterium gilvum (strain PYR-GCK)), this protein is Lysylphosphatidylglycerol biosynthesis bifunctional protein LysX (lysX).